The primary structure comprises 177 residues: Transmembrane protein 275 (177 aa).

The interval 1 to 20 (MPQAKKSTETLAPAPPGRSR) is disordered. 2 consecutive transmembrane segments (helical) span residues 36 to 56 (GLCV…AAFL) and 63 to 83 (LVVG…CCVC). The disordered stretch occupies residues 113 to 177 (ESSERTAQDT…LNFPRDPAAS (65 aa)). The segment covering 128–161 (SPAASAASSGRSSPGPGLFALDPPAPATAAPYLP) has biased composition (low complexity).

It localises to the membrane. The sequence is that of Transmembrane protein 275 from Mus musculus (Mouse).